A 205-amino-acid chain; its full sequence is Meiotic nuclear division protein 1 homolog (205 aa).

Serine 2 carries the post-translational modification N-acetylserine. A coiled-coil region spans residues 83–173 (KRKLEALNSQ…EAANRWTDNI (91 aa)).

It belongs to the MND1 family. In terms of assembly, heterodimer with PSMC3IP/HOP2. MND1-PSMC3IP interacts with DMC1 and RAD51 and binds to ssDNA and dsDNA showing no preference for either form of DNA.

It is found in the nucleus. Its function is as follows. Required for proper homologous chromosome pairing and efficient cross-over and intragenic recombination during meiosis. Stimulates both DMC1- and RAD51-mediated homologous strand assimilation, which is required for the resolution of meiotic double-strand breaks. The chain is Meiotic nuclear division protein 1 homolog from Mus musculus (Mouse).